Consider the following 90-residue polypeptide: uncharacterized protein (90 aa).

The N-terminal stretch at 1 to 20 (MEKLFVLVFALALLAFSSDA) is a signal peptide.

The protein resides in the secreted. This is an uncharacterized protein from Mus musculus (Mouse).